Consider the following 452-residue polypeptide: uncharacterized protein (452 aa).

7 consecutive transmembrane segments (helical) span residues 18–38, 81–101, 269–289, 317–337, 354–374, 390–410, and 428–448; these read PIIE…VLAK, LLPV…FLLA, IVLL…ALFI, AGQV…ATDI, VIIV…LPAF, VFVV…LTQI, and SYAV…LLVV.

It belongs to the auxin efflux carrier (TC 2.A.69) family.

Its subcellular location is the membrane. This is an uncharacterized protein from Schizosaccharomyces pombe (strain 972 / ATCC 24843) (Fission yeast).